The sequence spans 762 residues: Serine/threonine-protein kinase PLK4 (762 aa).

The region spanning 14–268 (YEVQHLLGKG…LEQVLRHPFM (255 aa)) is the Protein kinase domain. ATP is bound by residues 20 to 28 (LGKGGFACV) and Lys-43. Catalysis depends on Asp-139, which acts as the Proton acceptor. Residues 383–498 (AECISMPPLN…ARFVSLVKSK (116 aa)) enclose the Cryptic POLO box 1 (CPB1) domain. The region spanning 499-602 (TPKVTYFSGL…GRRPTPEVMP (104 aa)) is the Cryptic POLO box 2 (CPB2) domain. The 80-residue stretch at 657 to 736 (PIKRLNVPGV…LPQVQMKLKS (80 aa)) folds into the POLO box domain.

The protein belongs to the protein kinase superfamily. Ser/Thr protein kinase family. CDC5/Polo subfamily. Homodimer. Ubiquitinated by the SCF(Slimb) ubiquitin ligase complex; leading to its degradation by the proteasome during interphase and regulating centriole number and ensuring the block to centriole reduplication.

Its subcellular location is the cytoplasm. It is found in the cytoskeleton. The protein localises to the microtubule organizing center. It localises to the centrosome. The protein resides in the centriole. It carries out the reaction L-seryl-[protein] + ATP = O-phospho-L-seryl-[protein] + ADP + H(+). The catalysed reaction is L-threonyl-[protein] + ATP = O-phospho-L-threonyl-[protein] + ADP + H(+). Its function is as follows. Serine/threonine-protein kinase that plays a central role in centriole duplication. Able to trigger procentriole formation on the surface of the mother centriole cylinder, using mother centriole as a platform, leading to the recruitment of centriole biogenesis proteins such as sas-6. When overexpressed, it is able to induce centrosome amplification through the simultaneous generation of multiple procentrioles adjoining each parental centriole during S phase. Centrosome amplification following overexpression can initiate tumorigenesis, highlighting the importance of centrosome regulation in cancers. The sequence is that of Serine/threonine-protein kinase PLK4 (SAK) from Drosophila grimshawi (Hawaiian fruit fly).